Consider the following 487-residue polypeptide: Cyclic AMP-dependent transcription factor ATF-2 (487 aa).

Residues 7–31 (FLCTAPGCGQRFTNEDHLAVHKHKH) form a C2H2-type zinc finger. At T34 the chain carries Phosphothreonine; by PKC/PRKCH. S44 is subject to Phosphoserine; by VRK1. A phosphothreonine mark is found at T51 and T53. Residue T55 is modified to Phosphothreonine; by VRK1. Residues S72 and S94 each carry the phosphoserine modification. T98 bears the Phosphothreonine mark. At S103 the chain carries Phosphoserine; by PKC/PRKCA and PKC/PRKCB. Disordered stretches follow at residues 107–130 (EPSV…TNDE) and 241–355 (PGIP…RQKR). S118 carries the phosphoserine modification. Residues 264–275 (LTQQHPPVTNGD) show a composition bias toward polar residues. Positions 278–281 (KGHG) are essential for its histone acetyltransferase activity. Positions 300 to 316 (PATSTTETPASPAHTTP) are enriched in low complexity. S310 is modified (phosphoserine). S322 carries the phosphoserine; by PKC/PRKCA and PKC/PRKCB modification. Residues 328–345 (AANEDPDEKRRKFLERNR) show a composition bias toward basic and acidic residues. The bZIP domain occupies 334-397 (DEKRRKFLER…AQLKQLLLAH (64 aa)). Residues 336–356 (KRRKFLERNRAAASRCRQKRK) form a basic motif region. K339 is modified (N6-acetyllysine). A Phosphoserine; by PKC/PRKCA and PKC/PRKCB modification is found at S349. K356 bears the N6-acetyllysine mark. A leucine-zipper region spans residues 362-390 (LEKKAEDLSSLNGQLQSEVTLLRNEVAQL). Residues 387-396 (VAQLKQLLLA) carry the Nuclear export signal motif. A disordered region spans residues 407 to 487 (KKSGYHTADK…PSSQAQPSGS (81 aa)). Residues S424 and S428 each carry the phosphoserine modification. The segment covering 425–436 (VPSSPHTEAIQH) has biased composition (polar residues). Positions 437–449 (SSVSTSNGVSSTS) are enriched in low complexity. Residues 457–470 (SVLTQMADQSTEPA) show a composition bias toward polar residues. 2 positions are modified to phosphoserine; by ATM: S472 and S480. Polar residues predominate over residues 478–487 (PSSQAQPSGS).

It belongs to the bZIP family. ATF subfamily. As to quaternary structure, binds DNA as a dimer and can form a homodimer in the absence of DNA. Can form a heterodimer with JUN. Heterodimerization is essential for its transcriptional activity. Interacts with SMAD3 and SMAD4. Binds through its N-terminal region to UTF1 which acts as a coactivator of ATF2 transcriptional activity. Interacts with the HK1/VDAC1 complex. Interacts with NBN, MRE11, XPO1, KAT5 and CUL3. Post-translationally, phosphorylation of Thr-51 by MAPK14 and MAPK11, and at Thr-53 by MAPK1/ERK2, MAPK3/ERK1, MAPK11, MAPK12 and MAPK14 in response to external stimulus like insulin causes increased transcriptional activity. Phosphorylated by PLK3 following hyperosmotic stress. Also phosphorylated and activated by JNK and CaMK4. ATM-mediated phosphorylation at Ser-472 and Ser-480 stimulates its function in DNA damage response. Phosphorylation at Ser-44, Thr-55 and Ser-103 activates its transcriptional activity. Phosphorylation at Thr-51 or Thr-53 enhances acetylation of histones H2B and H4.

Its subcellular location is the nucleus. The protein resides in the cytoplasm. The protein localises to the mitochondrion outer membrane. Its function is as follows. Transcriptional activator which regulates the transcription of various genes, including those involved in anti-apoptosis, cell growth, and DNA damage response. Dependent on its binding partner, binds to CRE (cAMP response element) consensus sequences (5'-TGACGTCA-3') or to AP-1 (activator protein 1) consensus sequences (5'-TGACTCA-3'). In the nucleus, contributes to global transcription and the DNA damage response, in addition to specific transcriptional activities that are related to cell development, proliferation and death. In the cytoplasm, interacts with and perturbs HK1- and VDAC1-containing complexes at the mitochondrial outer membrane, thereby impairing mitochondrial membrane potential, inducing mitochondrial leakage and promoting cell death. The phosphorylated form (mediated by ATM) plays a role in the DNA damage response and is involved in the ionizing radiation (IR)-induced S phase checkpoint control and in the recruitment of the MRN complex into the IR-induced foci (IRIF). Exhibits histone acetyltransferase (HAT) activity which specifically acetylates histones H2B and H4 in vitro. In concert with CUL3 and RBX1, promotes the degradation of KAT5 thereby attenuating its ability to acetylate and activate ATM. Can elicit oncogenic or tumor suppressor activities depending on the tissue or cell type. In Rattus norvegicus (Rat), this protein is Cyclic AMP-dependent transcription factor ATF-2 (Atf2).